Consider the following 93-residue polypeptide: Hematopoietic cell signal transducer (93 aa).

Residues 1 to 18 form the signal peptide; that stretch reads MIHLGHILFLLLLPVAAA. At 19–48 the chain is on the extracellular side; sequence QTTPGERSSLPAFYPGTSGSCSGCGSLSLP. The helical transmembrane segment at 49 to 69 threads the bilayer; the sequence is LLAGLVAADAVASLLIVGAVF. Topologically, residues 70–93 are cytoplasmic; that stretch reads LCARPRRSPAQEDGKVYINMPGRG. Tyr86 carries the phosphotyrosine modification. The GRB2 binding site stretch occupies residues 86 to 88; sequence YIN. Positions 86 to 89 are PIK3R1 binding site; that stretch reads YINM.

This sequence belongs to the DAP10 family. Interacts with CLEC5A. Forms an CLEC5A/TYROBP/HCST trimolecular complex depending almost solely on TYROBP. Homodimer; Disulfide-linked. Heterohexamer composed of four subunits of HCST/DAP10 and two subunits of KLRK1. Interacts (via transmembrane domain) with KLRK1 (via transmembrane domain); the interaction is required for KLRK1 NK cell surface and induces NK cell-mediated cytotoxicity. Interacts with PIK3R1 and GRB2. Interacts with CD300H. Post-translationally, phosphorylated; PIK3R1 and GRB2 associate specifically with tyrosine-phosphorylated HCST. O-glycosylated. Predominantly expressed in hemopoietic cells such as NK cells, subset of T-cells and monocytes. Detected in leukocytes, spleen, and thymus.

The protein resides in the membrane. Functionally, transmembrane adapter protein which associates with KLRK1 to form an activation receptor KLRK1-HCST in lymphoid and myeloid cells; this receptor plays a major role in triggering cytotoxicity against target cells expressing cell surface ligands such as MHC class I chain-related MICA and MICB, and UL16-binding proteins (ULBPs); these ligands are up-regulated by stress conditions and pathological state such as viral infection and tumor transformation. Functions as a docking site for PI3-kinase PIK3R1 and GRB2. Interaction of ULBPs with KLRK1-HCST triggers calcium mobilization and activation of the PIK3R1, MAP2K/ERK, and JAK2/STAT5 signaling pathways. Both PIK3R1 and GRB2 are required for full KLRK1-HCST-mediated activation and ultimate killing of target cells. In NK cells, KLRK1-HCST signaling directly induces cytotoxicity and enhances cytokine production initiated via DAP12/TYROBP-associated receptors. In T-cells, it provides primarily costimulation for TCR-induced signals. KLRK1-HCST receptor plays a role in immune surveillance against tumors and is required for cytolysis of tumors cells; indeed, melanoma cells that do not express KLRK1 ligands escape from immune surveillance mediated by NK cells. The sequence is that of Hematopoietic cell signal transducer (HCST) from Homo sapiens (Human).